Reading from the N-terminus, the 270-residue chain is Putative phosphoenolpyruvate synthase regulatory protein (270 aa).

Residue 150 to 157 coordinates ADP; it reads GVSRCGKT.

It belongs to the pyruvate, phosphate/water dikinase regulatory protein family. PSRP subfamily.

It carries out the reaction [pyruvate, water dikinase] + ADP = [pyruvate, water dikinase]-phosphate + AMP + H(+). The enzyme catalyses [pyruvate, water dikinase]-phosphate + phosphate + H(+) = [pyruvate, water dikinase] + diphosphate. Its function is as follows. Bifunctional serine/threonine kinase and phosphorylase involved in the regulation of the phosphoenolpyruvate synthase (PEPS) by catalyzing its phosphorylation/dephosphorylation. This Aeromonas salmonicida (strain A449) protein is Putative phosphoenolpyruvate synthase regulatory protein.